A 195-amino-acid polypeptide reads, in one-letter code: ATP-dependent Clp protease proteolytic subunit (195 aa).

Ser-98 serves as the catalytic Nucleophile. The active site involves His-123.

Belongs to the peptidase S14 family. Fourteen ClpP subunits assemble into 2 heptameric rings which stack back to back to give a disk-like structure with a central cavity, resembling the structure of eukaryotic proteasomes.

Its subcellular location is the cytoplasm. The enzyme catalyses Hydrolysis of proteins to small peptides in the presence of ATP and magnesium. alpha-casein is the usual test substrate. In the absence of ATP, only oligopeptides shorter than five residues are hydrolyzed (such as succinyl-Leu-Tyr-|-NHMec, and Leu-Tyr-Leu-|-Tyr-Trp, in which cleavage of the -Tyr-|-Leu- and -Tyr-|-Trp bonds also occurs).. Its function is as follows. Cleaves peptides in various proteins in a process that requires ATP hydrolysis. Has a chymotrypsin-like activity. Plays a major role in the degradation of misfolded proteins. The chain is ATP-dependent Clp protease proteolytic subunit from Caldanaerobacter subterraneus subsp. tengcongensis (strain DSM 15242 / JCM 11007 / NBRC 100824 / MB4) (Thermoanaerobacter tengcongensis).